The primary structure comprises 59 residues: Protein translocase subunit SecE (59 aa).

Residues 33-53 form a helical membrane-spanning segment; the sequence is GAGIALVGLLGFIIFAVMTFV.

The protein belongs to the SecE/SEC61-gamma family. In terms of assembly, component of the Sec protein translocase complex. Heterotrimer consisting of SecY (alpha), SecG (beta) and SecE (gamma) subunits. The heterotrimers can form oligomers, although 1 heterotrimer is thought to be able to translocate proteins. Interacts with the ribosome. May interact with SecDF, and other proteins may be involved.

The protein localises to the cell membrane. Functionally, essential subunit of the Sec protein translocation channel SecYEG. Clamps together the 2 halves of SecY. May contact the channel plug during translocation. The polypeptide is Protein translocase subunit SecE (Haloarcula marismortui (strain ATCC 43049 / DSM 3752 / JCM 8966 / VKM B-1809) (Halobacterium marismortui)).